A 296-amino-acid polypeptide reads, in one-letter code: Putative ankyrin repeat protein FPV216 (296 aa).

ANK repeat units follow at residues serine 73–threonine 102 and leucine 107–isoleucine 136.

The protein is Putative ankyrin repeat protein FPV216 of Fowlpox virus (strain NVSL) (FPV).